The sequence spans 530 residues: Laccase-2 (530 aa).

Positions 1 to 23 (MLLSSAFVGSCLAILNFAAAVSA) are cleaved as a signal peptide. Plastocyanin-like domains lie at 36-154 (NKVI…YDPE) and 167-311 (TTII…RYTN). The N-linked (GlcNAc...) asparagine glycan is linked to asparagine 82. 2 residues coordinate Cu cation: histidine 88 and histidine 90. Disulfide bonds link cysteine 109-cysteine 520 and cysteine 141-cysteine 228. An N-linked (GlcNAc...) asparagine glycan is attached at asparagine 120. Cu cation contacts are provided by histidine 133 and histidine 135. N-linked (GlcNAc...) asparagine glycosylation is found at asparagine 191, asparagine 240, asparagine 292, asparagine 311, asparagine 366, asparagine 375, asparagine 392, and asparagine 412. Residues 379-504 (YVNPTVPVLL…FAVVLAEAPQ (126 aa)) form the Plastocyanin-like 3 domain. Cu cation-binding residues include histidine 428, histidine 431, histidine 433, histidine 484, cysteine 485, histidine 486, and histidine 490.

The protein belongs to the multicopper oxidase family. Requires Cu cation as cofactor.

The protein resides in the secreted. It catalyses the reaction 4 hydroquinone + O2 = 4 benzosemiquinone + 2 H2O. Its activity is regulated as follows. Inhibited by chloride ions. Inhibited by citrate. Inhibited by oxalate. Activated by acetate. In terms of biological role, in vitro, has activity towards 2,2'-azino-bis(3-ethylbenzthiazoline-6-sulfonic acid) (ABTS), 2,6-dimethoxy-phenol, and guaiacol. Although brown rot fungi preferentially degrade hemicellulose and cellulose, the enzyme may contribute to generating small amounts of lignin breakdown products required for catalytic reactions. This Fomitopsis schrenkii (Brown rot fungus) protein is Laccase-2.